The following is an 873-amino-acid chain: Disks large homolog 1 (873 aa).

The region spanning 4–64 is the L27 domain; it reads RQKDAQRALQ…YYEVSLQDTE (61 aa). The disordered stretch occupies residues 62–135; that stretch reads DTEDKPIEDS…SPHIPGDARP (74 aa). The segment covering 63–77 has biased composition (basic and acidic residues); it reads TEDKPIEDSSLKSRE. Positions 85-96 are enriched in polar residues; sequence WNLSVPPSTTGP. 2 PDZ domains span residues 230-317 and 325-412; these read EITL…RRRK and DVKL…AKPT. A compositionally biased stretch (polar residues) spans 441–456; sequence SYLSQPLTPATPSRYS. Residues 441-464 are disordered; it reads SYLSQPLTPATPSRYSPVSKGMLG. The PDZ 3 domain maps to 474 to 555; it reads KIVLHRGTTG…TVTIIAQYRP (82 aa). The disordered stretch occupies residues 636-662; that stretch reads NKDSGEQDTSDVDQHVTSNASDSESSF. Residues 650 to 662 are compositionally biased toward polar residues; that stretch reads HVTSNASDSESSF. One can recognise a Guanylate kinase-like domain in the interval 683–858; that stretch reads SRPVIILGPM…IYNQVKQIIE (176 aa).

This sequence belongs to the MAGUK family.

The protein resides in the cell membrane. It is found in the endoplasmic reticulum membrane. The protein localises to the cell junction. Its subcellular location is the apical cell membrane. In terms of biological role, essential multidomain scaffolding protein required for normal development. Recruits channels, receptors and signaling molecules to discrete plasma membrane domains in polarized cells. Promotes epithelial cell layer barrier function via maintaining cell-cell adhesion. May play a role in adherens junction assembly, signal transduction and cell proliferation. May play a role in synapse assembly and function. This Danio rerio (Zebrafish) protein is Disks large homolog 1 (dlg1).